Here is a 424-residue protein sequence, read N- to C-terminus: S-phase kinase-associated protein 2 (424 aa).

A mediates interaction with hepatitis C virus non-structural protein NS5A region spans residues 1-220; that stretch reads MHRKHLQEIP…LSLEGLRLSD (220 aa). The tract at residues 39 to 73 is disordered; sequence SALEKEEPDSENIPQELLSNLGHPESPPRKRLKSK. Residue Ser-64 is modified to Phosphoserine. The Nuclear localization signal motif lies at 67-73; the sequence is RKRLKSK. Lys-68 and Lys-71 each carry N6-acetyllysine; by p300/EP300. Ser-72 and Ser-75 each carry phosphoserine. In terms of domain architecture, F-box spans 94–140; it reads GVSWDSLPDELLLGIFSCLCLPELLKVSGVCKRWYRLASDESLWQTL. LRR repeat units lie at residues 151–176, 177–204, 210–234, 235–257, 258–284, 286–308, 309–330, 334–356, 359–378, and 380–401; these read VTGR…PLAE, HFSP…ILSQ, NLSL…NLVR, LNLS…SCSR, LDEL…VSET, TQLN…LVRR, CPNL…CFQE, LNYL…LLEL, IPTL…TLQL, and KEAL…RPTI. The residue at position 179 (Ser-179) is a Phosphoserine. The tract at residues 402–424 is mediates interaction with IFI27; the sequence is GNKKNQEIWGIKCRLTLQKPSCL.

Part of a SCF(SKP2) complex consisting of CUL1, RBX1, SKP1 and SKP2. Component of a SCF(SKP2)-like complex containing CUL1, SKP1, TRIM21 and SKP2. Interacts directly with CUL1 and SKP1. Interacts with CKS1. Interacts with ASB2 which is the substrate-recognition component of a probable ECS E3 ubiquitin-protein ligase complex; ASB2 is likely to bridge the formation of dimeric E3-ubiquitin-protein ligase complexes composed of an ECS complex and an SCF(SKP2) complex. Interacts with the cyclin-A-CDK2 complex. Interacts with ORC1, phosphorylated CDT1, phosphorylated RBL2, ELF4, phosphorylated RAG2, FOXO1, UBP43, MYC, TOB1, TAL1 and KMT2A/MLL1. Interacts with TRIM21. Interacts with cyclin-E. Interacts with IFI27; promotes the ubiquitin-mediated proteasomal degradation of hepatitis C virus/HCV non-structural protein NS5A. Interacts with CARM1. As to quaternary structure, (Microbial infection) Interacts with hepatitis C virus/HCV non-structural protein NS5A; promotes the ubiquitin-mediated proteasomal degradation of NS5A. In terms of processing, phosphorylated on serine and threonine resudues in response to DNA damage, promoting 'Lys-63'-linked ubiquitination of NBN. Post-translationally, ubiquitinated by the APC/C complex, leading to its degradation by the proteasome. Deubiquitinated by USP13. Acetylation at Lys-68 and Lys-71 increases stability through impairment of APC/C-mediated proteolysis and promotes cytoplasmic retention. Deacetylated by SIRT3.

The protein localises to the cytoplasm. It localises to the nucleus. It participates in protein modification; protein ubiquitination. Substrate recognition component of a SCF (SKP1-CUL1-F-box protein) E3 ubiquitin-protein ligase complex which mediates the ubiquitination and subsequent proteasomal degradation of target proteins involved in cell cycle progression, signal transduction and transcription. Specifically recognizes phosphorylated CDKN1B/p27kip and is involved in regulation of G1/S transition. Degradation of CDKN1B/p27kip also requires CKS1. Recognizes target proteins ORC1, CDT1, RBL2, KMT2A/MLL1, CDK9, RAG2, NBN, FOXO1, UBP43, YTHDF2, and probably MYC, TOB1 and TAL1. Degradation of TAL1 also requires STUB1. Recognizes CDKN1A in association with CCNE1 or CCNE2 and CDK2. Promotes ubiquitination and destruction of CDH1 in a CK1-dependent manner, thereby regulating cell migration. Following phosphorylation in response to DNA damage, mediates 'Lys-63'-linked ubiquitination of NBN, promoting ATM recruitment to DNA damage sites and DNA repair via homologous recombination. In terms of biological role, through the ubiquitin-mediated proteasomal degradation of hepatitis C virus non-structural protein 5A, has an antiviral activity towards that virus. The chain is S-phase kinase-associated protein 2 (SKP2) from Homo sapiens (Human).